The following is a 165-amino-acid chain: uncharacterized protein (165 aa).

Residues 16-36 (ASISSILNFFFFYIMEYFVAV) traverse the membrane as a helical segment.

Belongs to the asfivirus F165R family.

It is found in the host membrane. This is an uncharacterized protein from African swine fever virus (strain Badajoz 1971 Vero-adapted) (Ba71V).